Reading from the N-terminus, the 470-residue chain is ATP synthase subunit beta (470 aa).

Residue 157–164 (GGAGVGKT) coordinates ATP.

It belongs to the ATPase alpha/beta chains family. In terms of assembly, F-type ATPases have 2 components, CF(1) - the catalytic core - and CF(0) - the membrane proton channel. CF(1) has five subunits: alpha(3), beta(3), gamma(1), delta(1), epsilon(1). CF(0) has three main subunits: a(1), b(2) and c(9-12). The alpha and beta chains form an alternating ring which encloses part of the gamma chain. CF(1) is attached to CF(0) by a central stalk formed by the gamma and epsilon chains, while a peripheral stalk is formed by the delta and b chains.

It localises to the cell inner membrane. It catalyses the reaction ATP + H2O + 4 H(+)(in) = ADP + phosphate + 5 H(+)(out). Its function is as follows. Produces ATP from ADP in the presence of a proton gradient across the membrane. The catalytic sites are hosted primarily by the beta subunits. In Geotalea daltonii (strain DSM 22248 / JCM 15807 / FRC-32) (Geobacter daltonii), this protein is ATP synthase subunit beta.